We begin with the raw amino-acid sequence, 157 residues long: MRIGHGYDVHRLVEDRKLIMGGVDIPWEKGLLGHSDADVLLHAIADALLGALAMGDIGKHFPDTDPAFKGADSMKLLEHVVGLIRTQGYAVGNLDATIIAQRPKMAPHIQAMRENVARACGVEVDRINVKATTEEGLGFTGTGEGISAHAVVLLIPQ.

2 residues coordinate a divalent metal cation: D8 and H10. 4-CDP-2-C-methyl-D-erythritol 2-phosphate-binding positions include 8–10 (DVH) and 34–35 (HS). H42 provides a ligand contact to a divalent metal cation. 4-CDP-2-C-methyl-D-erythritol 2-phosphate is bound by residues 56-58 (DIG), 61-65 (FPDTD), 100-106 (AQRPKMA), 132-135 (TTEE), and F139.

It belongs to the IspF family. In terms of assembly, homotrimer. Requires a divalent metal cation as cofactor.

It catalyses the reaction 4-CDP-2-C-methyl-D-erythritol 2-phosphate = 2-C-methyl-D-erythritol 2,4-cyclic diphosphate + CMP. Its pathway is isoprenoid biosynthesis; isopentenyl diphosphate biosynthesis via DXP pathway; isopentenyl diphosphate from 1-deoxy-D-xylulose 5-phosphate: step 4/6. In terms of biological role, involved in the biosynthesis of isopentenyl diphosphate (IPP) and dimethylallyl diphosphate (DMAPP), two major building blocks of isoprenoid compounds. Catalyzes the conversion of 4-diphosphocytidyl-2-C-methyl-D-erythritol 2-phosphate (CDP-ME2P) to 2-C-methyl-D-erythritol 2,4-cyclodiphosphate (ME-CPP) with a corresponding release of cytidine 5-monophosphate (CMP). This Trichlorobacter lovleyi (strain ATCC BAA-1151 / DSM 17278 / SZ) (Geobacter lovleyi) protein is 2-C-methyl-D-erythritol 2,4-cyclodiphosphate synthase.